Consider the following 323-residue polypeptide: Transcription factor MYB108 (323 aa).

HTH myb-type domains are found at residues 16 to 68 and 69 to 123; these read EMDL…LNYL and RPDV…QKHA. 2 consecutive DNA-binding regions (H-T-H motif) follow at residues 44-68 and 96-119; these read WNSLSRCAGLQRTGKSCRLRWLNYL and WSKIAQYLPGRTDNEIKNYWRTRV.

In terms of assembly, interacts with BOI, but not with BRG1. In terms of processing, ubiquitinated in vitro by BOI. In terms of tissue distribution, expressed specifically in flowers. Restricted to anthers in maturing flowers. Strongest expression in the vascular and connective tissue where the anther attaches to the filament. Not detected in pollen.

Its subcellular location is the nucleus. In terms of biological role, transcription factor contributing to the regulation of stamen maturation and male fertility in response to jasmonate signaling. Required for correct timing of anther dehiscence. Acts as a negative regulator of abscisic acid-induced cell death. Not involved in the regulation of BOI. Regulated by MYB21 and at a lower level by MYB24. Negatively regulated by the proteasome in an SCF(COI1) E3 ubiquitin-protein ligase complex-dependent manner. The protein is Transcription factor MYB108 (MYB108) of Arabidopsis thaliana (Mouse-ear cress).